A 791-amino-acid polypeptide reads, in one-letter code: Ribosome biogenesis protein ERB1 (791 aa).

The span at 1–12 (MARKNSSLNGSE) shows a compositional bias: polar residues. 2 disordered regions span residues 1–60 (MARK…DDSD) and 68–87 (AEEE…SEEG). Acidic residues-rich tracts occupy residues 25–60 (ESEL…DDSD) and 69–87 (EEEN…SEEG). Positions 254–372 (RFVPSKHEAK…LRKVPGYSES (119 aa)) are required for interaction with NOP7. Positions 372 to 408 (SVRERFERSLDLYLAPRVRKNKLNIDPESLIPELPST) are required for interaction with YTM1. 7 WD repeats span residues 424–463 (GHKG…EVYQ), 472–512 (NNDD…FEIE), 576–618 (TCRK…TQSP), 621–659 (KSKG…LIKK), 662–701 (PGAR…TPYK), 705–744 (YHEK…DLMK), and 760–791 (VNSL…LWTT).

Belongs to the WD repeat BOP1/ERB1 family. As to quaternary structure, component of the NOP7 complex, composed of ERB1, NOP7 and YTM1. The complex is held together by ERB1, which interacts with NOP7 via its N-terminal domain and with YTM1 via a high-affinity interaction between the seven-bladed beta-propeller domains of the 2 proteins. The NOP7 complex associates with the 66S pre-ribosome.

The protein localises to the nucleus. It localises to the nucleolus. The protein resides in the nucleoplasm. Component of the NOP7 complex, which is required for maturation of the 25S and 5.8S ribosomal RNAs and formation of the 60S ribosome. The chain is Ribosome biogenesis protein ERB1 from Kluyveromyces lactis (strain ATCC 8585 / CBS 2359 / DSM 70799 / NBRC 1267 / NRRL Y-1140 / WM37) (Yeast).